Here is a 205-residue protein sequence, read N- to C-terminus: Rho-related protein racI (205 aa).

A GTP-binding site is contributed by 12–19; that stretch reads GDSKTGKT. The Effector region motif lies at 34-42; sequence YVPSHVDAT. GTP contacts are provided by residues 59-63 and 119-122; these read DSSAL and TKCD. Cys202 is subject to Cysteine methyl ester. Cys202 carries S-geranylgeranyl cysteine lipidation. Positions 203–205 are cleaved as a propeptide — removed in mature form; the sequence is IIQ.

Belongs to the small GTPase superfamily. Rho family.

The protein resides in the cell membrane. This chain is Rho-related protein racI (racI), found in Dictyostelium discoideum (Social amoeba).